The primary structure comprises 272 residues: MSEMEVMASIMRDHILALLKEGKRVDGRSLEDYRDLEIKINVIEKAEGSAWVKLGNTQVLVGIKVDMGEPFPDLPEKGVITTNVELVPLASPSFEPGPPDERAIELARVVDRGIRESGAVELEKLVIVPGKLVRVVFIDVHVLDHDGNLLDASGIGAIAALMSAKMPKVVYDEESGEVQILDEYEPLPVSKMPIPVTIAKVGGNLLVDPNLDEELVMDGRITITTDENGMISSVQKSEGGSFKLEEVMYAIDLALTKAAEIREKVLEAVGAE.

This sequence belongs to the RNase PH family. Rrp42 subfamily. In terms of assembly, component of the archaeal exosome complex. Forms a hexameric ring-like arrangement composed of 3 Rrp41-Rrp42 heterodimers. The hexameric ring associates with a trimer of Rrp4 and/or Csl4 subunits.

It is found in the cytoplasm. Its function is as follows. Non-catalytic component of the exosome, which is a complex involved in RNA degradation. Contributes to the structuring of the Rrp41 active site. The polypeptide is Exosome complex component Rrp42 (Thermococcus onnurineus (strain NA1)).